The following is a 42-amino-acid chain: Delta-actitoxin-Ael2d (42 aa).

3 cysteine pairs are disulfide-bonded: Cys-4–Cys-37, Cys-6–Cys-30, and Cys-20–Cys-38.

It belongs to the sea anemone type 3 (BDS) potassium channel toxin family.

Its subcellular location is the secreted. The protein resides in the nematocyst. In terms of biological role, binds to voltage-gated sodium channels (Nav), and slows down the inactivation of mammalian Nav1.2/SCN2A, Nav1.3/SCN3A Nav1.4/SCN4A, Nav1.6/SCN8A, insect DmNav1 and BgNav1 channels, and arachnid VdNav1 channel. This toxin acts by binding to site 3 of sodium channels. In Anthopleura elegantissima (Green aggregating anemone), this protein is Delta-actitoxin-Ael2d.